Consider the following 160-residue polypeptide: Putative lipoprotein YfiB (160 aa).

A signal peptide spans 1–18; the sequence is MIKHLVAPLVFTSLILTG. Cysteine 19 carries the N-palmitoyl cysteine lipid modification. Residue cysteine 19 is the site of S-diacylglycerol cysteine attachment. Positions 43 to 160 constitute an OmpA-like domain; the sequence is AGDWSLGLSD…RRVAVVITTP (118 aa).

This sequence belongs to the outer membrane OOP (TC 1.B.6) superfamily.

Its subcellular location is the cell membrane. The chain is Putative lipoprotein YfiB (yfiB) from Escherichia coli (strain K12).